Here is a 385-residue protein sequence, read N- to C-terminus: uncharacterized protein (385 aa).

This sequence belongs to the mimivirus L17x/L18x family.

This is an uncharacterized protein from Acanthamoeba polyphaga mimivirus (APMV).